We begin with the raw amino-acid sequence, 551 residues long: Cleavage and polyadenylation specificity factor subunit 6 (551 aa).

The tract at residues 1–213 (MADGVDHIDI…RGRFPGAVPG (213 aa)) is necessary for interaction with NXF1. The RRM domain occupies 81-161 (IALYIGNLTW…QNPVVTPCNK (81 aa)). The tract at residues 81–161 (IALYIGNLTW…QNPVVTPCNK (81 aa)) is necessary for interaction with NUDT21/CPSF5. Residues 81–161 (IALYIGNLTW…QNPVVTPCNK (81 aa)) form a necessary for nuclear paraspeckles localization region. Residue T157 is modified to Phosphothreonine. Over residues 169 to 180 (MQSRKTTQSGQM) the composition is skewed to polar residues. 2 disordered regions span residues 169–411 (MQSR…PLSE) and 477–551 (LHGI…YRHR). Positions 202-206 (RGRGR) match the GAR motif. The span at 207-219 (FPGAVPGGDRFPG) shows a compositional bias: low complexity. Pro residues-rich tracts occupy residues 220–265 (PAGP…PLAG), 285–366 (GQPP…PPPT), and 377–388 (GPPPTDPYGRPP). Residues 358-551 (NPAFFPPPTN…RDREREYRHR (194 aa)) form a (Microbial infection) Binds to HIV-1 capsid protein p24 (CA) region. Over residues 389–404 (PYDRGDYGPPGREMDT) the composition is skewed to basic and acidic residues. Phosphothreonine is present on residues T404 and T407. Residues 404–551 (TARTPLSEAE…RDREREYRHR (148 aa)) form a sufficient for nuclear speckle localization region. A necessary for RNA-binding region spans residues 405 to 551 (ARTPLSEAEF…RDREREYRHR (147 aa)). The tract at residues 481–551 (ESKSYGSGSR…RDREREYRHR (71 aa)) is necessary for interaction with SRSF3, SRSF7 and TRA2B/SFRS10. Positions 489–503 (SRRERSRERDHSRSR) are enriched in basic and acidic residues. The segment at 490–551 (RRERSRERDH…RDREREYRHR (62 aa)) is arg/Ser-rich domain. Phosphoserine is present on residues S494, S500, S511, S513, and S525. Residues 504-514 (EKSRRHKSRSR) show a composition bias toward basic residues. The segment at 510 to 551 (KSRSRDRHDDYYRERSRERERHRDRDRDRDRERDREREYRHR) is sufficient for nuclear targeting. Positions 515-551 (DRHDDYYRERSRERERHRDRDRDRDRERDREREYRHR) are enriched in basic and acidic residues.

This sequence belongs to the RRM CPSF6/7 family. In terms of assembly, component of the cleavage factor Im (CFIm) complex which is a heterotetramer composed of two subunits of NUDT21/CPSF5 and two subunits of CPSF6 or CPSF7 or a heterodimer of CPSF6 and CPSF7. The cleavage factor Im (CFIm) complex associates with the CPSF and CSTF complexes to promote the assembly of the core mRNA 3'-processing machinery. Associates with the exon junction complex (EJC). Associates with the 80S ribosome particle. Interacts (via the RRM domain) with NUDT21/CPSF5; this interaction is direct and enhances binding to RNA. Interacts (via Arg/Ser-rich domain) with FIP1L1 (preferentially via unphosphorylated form and Arg/Glu/Asp-rich domain); this interaction mediates, at least in part, the interaction between the CFIm and CPSF complexes and may be inhibited by CPSF6 hyper-phosphorylation. Interacts (via N-terminus) with NXF1; this interaction is direct. Interacts with SRSF3. Interacts with SRSF7. Interacts with SNRNP70. Interacts with TRA2B/SFRS10. Interacts with UPF1. Interacts with UPF3B. Interacts with VIRMA. Interacts (via Arg/Ser-rich domain) with TNPO3; promoting nuclear import of CPSF6 independently of its phosphorylation status. Interacts with YTHDC1. As to quaternary structure, (Microbial infection) Interacts (via C-terminus) with HIV-1 capsid protein p24 (CA). Phosphorylated. Phosphorylated in the Arg/Ser-rich domain by SRPK1, in vitro. Post-translationally, symmetrically dimethylated on arginine residues in the GAR motif by PRMT5 in a WDR77- and CLNS1A-dependent manner. Asymmetrically dimethylated on arginine residues in the GAR motif by PRMT1.

Its subcellular location is the nucleus. The protein resides in the nucleoplasm. It is found in the nucleus speckle. The protein localises to the cytoplasm. In terms of biological role, component of the cleavage factor Im (CFIm) complex that functions as an activator of the pre-mRNA 3'-end cleavage and polyadenylation processing required for the maturation of pre-mRNA into functional mRNAs. CFIm contributes to the recruitment of multiprotein complexes on specific sequences on the pre-mRNA 3'-end, so called cleavage and polyadenylation signals (pA signals). Most pre-mRNAs contain multiple pA signals, resulting in alternative cleavage and polyadenylation (APA) producing mRNAs with variable 3'-end formation. The CFIm complex acts as a key regulator of cleavage and polyadenylation site choice during APA through its binding to 5'-UGUA-3' elements localized in the 3'-untranslated region (UTR) for a huge number of pre-mRNAs. CPSF6 enhances NUDT21/CPSF5 binding to 5'-UGUA-3' elements localized upstream of pA signals and promotes RNA looping, and hence activates directly the mRNA 3'-processing machinery. Plays a role in mRNA export. Its function is as follows. (Microbial infection) Binds HIV-1 capsid-nucleocapsid (HIV-1 CA-NC) complexes and might thereby promote the integration of the virus in the nucleus of dividing cells (in vitro). The polypeptide is Cleavage and polyadenylation specificity factor subunit 6 (Homo sapiens (Human)).